The chain runs to 334 residues: NAD-dependent protein deacylase sirtuin-6 (334 aa).

An N-acetylserine modification is found at serine 2. Serine 10 is modified (phosphoserine). One can recognise a Deacetylase sirtuin-type domain in the interval 27–272 (PEELERKVWE…CRLMKHLGLE (246 aa)). Position 33 is an N6-acetyllysine (lysine 33). NAD(+)-binding residues include alanine 53, threonine 57, phenylalanine 64, arginine 65, tryptophan 71, glutamine 113, and histidine 133. Histidine 133 serves as the catalytic Proton acceptor. Residues cysteine 141, cysteine 144, and cysteine 166 each contribute to the Zn(2+) site. Lysine 170 is covalently cross-linked (Glycyl lysine isopeptide (Lys-Gly) (interchain with G-Cter in ubiquitin)). Zn(2+) is bound at residue cysteine 177. NAD(+) is bound by residues glycine 214, serine 216, asparagine 240, glutamine 242, and valine 258. Positions 312-334 (KSKPNSPILHRPPKRVKTEAAPS) are disordered.

The protein belongs to the sirtuin family. Class IV subfamily. Homodimer; binds to nucleosomes and DNA ends as a homodimer. Interacts with RELA; interferes with RELA binding to target DNA. Interacts with SMARCA5; promoting recruitment of SMARCA5/SNF2H to double-strand breaks (DSBs) sites. Interacts with the mTORC2 complex; preventing the ability of SIRT6 to deacetylate FOXO1. Interacts with the CLOCK-BMAL1 complex; recruited by the CLOCK-BMAL1 complex to regulate expression of clock-controlled genes. Interacts with CSNK2A2; preventing CSNK2A2 localization to the nucleus. Zn(2+) is required as a cofactor. In terms of processing, acetylated at Lys-33. Deacetylation at Lys-33 by SIRT1 promotes homomultimerization and binding to double-strand breaks (DSBs) sites. Phosphorylation at Ser-10 by MAPK8/JNK1 in response to oxidative stress stimulates the mono-ADP-ribosyltransferase activity on PARP1, leading to PARP1 recruitment to double-strand breaks (DSBs). Post-translationally, monoubiquitinated at Lys-170 by STUB1/CHIP, preventing its degradation by the proteasome. In terms of processing, sumoylated, leading to specifically decrease ability to deacetylate histone H3 at 'Lys-56' (H3K56ac). As to expression, highest levels are found in muscle, thymus, spleen, brain and heart (at protein level).

The protein resides in the nucleus. Its subcellular location is the chromosome. The protein localises to the telomere. It is found in the endoplasmic reticulum. The enzyme catalyses N(6)-acetyl-L-lysyl-[protein] + NAD(+) + H2O = 2''-O-acetyl-ADP-D-ribose + nicotinamide + L-lysyl-[protein]. It carries out the reaction N(6)-tetradecanoyl-L-lysyl-[protein] + NAD(+) + H2O = 2''-O-tetradecanoyl-ADP-D-ribose + nicotinamide + L-lysyl-[protein]. The catalysed reaction is N(6)-hexadecanoyl-L-lysyl-[protein] + NAD(+) + H2O = 2''-O-hexadecanoyl-ADP-D-ribose + nicotinamide + L-lysyl-[protein]. It catalyses the reaction L-lysyl-[protein] + NAD(+) = N(6)-(ADP-D-ribosyl)-L-lysyl-[protein] + nicotinamide + H(+). The enzyme catalyses L-arginyl-[protein] + NAD(+) = N(omega)-(ADP-D-ribosyl)-L-arginyl-[protein] + nicotinamide + H(+). Compared to the defatty-acylase activity, the protein deacetylase activity is weak in vitro, and requires activation. The histone deacetylase activity is strongly activated upon binding to nucleosomes and chromatin in vivo. Two molecules of SIRT6 associate with the acidic patch of one nucleosome, while the C-terminal disordered region of SIRT6 associates with nucleosomal DNA, leading to efficient histone deacetylation. The protein-lysine deacetylase activity is also activated by long-chain free fatty-acids. In terms of biological role, NAD-dependent protein deacetylase, deacylase and mono-ADP-ribosyltransferase that plays an essential role in DNA damage repair, telomere maintenance, metabolic homeostasis, inflammation, tumorigenesis and aging. Displays protein-lysine deacetylase or defatty-acylase (demyristoylase and depalmitoylase) activity, depending on the context. Acts as a key histone deacetylase by catalyzing deacetylation of histone H3 at 'Lys-9', 'Lys-18' and 'Lys-56' (H3K9ac, H3K18ac and H3K56ac, respectively), suppressing target gene expression of several transcription factors, including NF-kappa-B. Acts as an inhibitor of transcription elongation by mediating deacetylation of H3K9ac and H3K56ac, preventing release of NELFE from chromatin and causing transcriptional pausing. Involved in DNA repair by promoting double-strand break (DSB) repair: acts as a DSB sensor by recognizing and binding DSB sites, leading to (1) recruitment of DNA repair proteins, such as SMARCA5/SNF2H, and (2) deacetylation of histone H3K9ac and H3K56ac. SIRT6 participation to DSB repair is probably involved in extension of life span. Also promotes DNA repair by deacetylating non-histone proteins, such as DDB2 and p53/TP53. Specifically deacetylates H3K18ac at pericentric heterochromatin, thereby maintaining pericentric heterochromatin silencing at centromeres and protecting against genomic instability and cellular senescence. Involved in telomere maintenance by catalyzing deacetylation of histone H3 in telomeric chromatin, regulating telomere position effect and telomere movement in response to DNA damage. Required for embryonic stem cell differentiation by mediating histone deacetylation of H3K9ac. Plays a major role in metabolism by regulating processes such as glycolysis, gluconeogenesis, insulin secretion and lipid metabolism. Inhibits glycolysis via histone deacetylase activity and by acting as a corepressor of the transcription factor HIF1A, thereby controlling the expression of multiple glycolytic genes. Has tumor suppressor activity by repressing glycolysis, thereby inhibiting the Warburg effect. Also regulates glycolysis and tumorigenesis by mediating deacetylation and nuclear export of non-histone proteins, such as isoform M2 of PKM (PKM2). Acts as a negative regulator of gluconeogenesis by mediating deacetylation of non-histone proteins, such as FOXO1 and KAT2A/GCN5. Promotes beta-oxidation of fatty acids during fasting by catalyzing deacetylation of NCOA2, inducing coactivation of PPARA. Acts as a regulator of lipid catabolism in brown adipocytes, both by catalyzing deacetylation of histones and non-histone proteins, such as FOXO1. Also acts as a regulator of circadian rhythms, both by regulating expression of clock-controlled genes involved in lipid and carbohydrate metabolism, and by catalyzing deacetylation of PER2. The defatty-acylase activity is specifically involved in regulation of protein secretion. Has high activity toward long-chain fatty acyl groups and mediates protein-lysine demyristoylation and depalmitoylation of target proteins, such as RRAS2 and TNF, thereby regulating their secretion. Also acts as a mono-ADP-ribosyltransferase by mediating mono-ADP-ribosylation of PARP1, TRIM28/KAP1 or SMARCC2/BAF170. Mono-ADP-ribosyltransferase activity is involved in DNA repair, cellular senescence, repression of LINE-1 retrotransposon elements and regulation of transcription. The protein is NAD-dependent protein deacylase sirtuin-6 of Mus musculus (Mouse).